A 234-amino-acid chain; its full sequence is Sugar fermentation stimulation protein homolog (234 aa).

This sequence belongs to the SfsA family.

The protein is Sugar fermentation stimulation protein homolog of Pseudoalteromonas atlantica (strain T6c / ATCC BAA-1087).